Here is a 367-residue protein sequence, read N- to C-terminus: Glutamate 5-kinase (367 aa).

Residue Lys17 coordinates ATP. Substrate-binding residues include Ser57, Asp144, and Asn156. ATP-binding positions include 176-177 (SD) and 217-223 (TGGMVSK). A PUA domain is found at 279 to 357 (VGSLTLDEGA…SELPCELRRP (79 aa)).

Belongs to the glutamate 5-kinase family.

Its subcellular location is the cytoplasm. It catalyses the reaction L-glutamate + ATP = L-glutamyl 5-phosphate + ADP. Its pathway is amino-acid biosynthesis; L-proline biosynthesis; L-glutamate 5-semialdehyde from L-glutamate: step 1/2. Catalyzes the transfer of a phosphate group to glutamate to form L-glutamate 5-phosphate. This chain is Glutamate 5-kinase, found in Mycobacterium leprae (strain Br4923).